Consider the following 297-residue polypeptide: Probable porphobilinogen deaminase (297 aa).

Cysteine 233 is modified (S-(dipyrrolylmethanemethyl)cysteine).

It belongs to the HMBS family. The cofactor is dipyrromethane.

It catalyses the reaction 4 porphobilinogen + H2O = hydroxymethylbilane + 4 NH4(+). The protein operates within porphyrin-containing compound metabolism; protoporphyrin-IX biosynthesis; coproporphyrinogen-III from 5-aminolevulinate: step 2/4. Tetrapolymerization of the monopyrrole PBG into the hydroxymethylbilane pre-uroporphyrinogen in several discrete steps. This chain is Probable porphobilinogen deaminase, found in Thermoplasma volcanium (strain ATCC 51530 / DSM 4299 / JCM 9571 / NBRC 15438 / GSS1).